The primary structure comprises 641 residues: Chaperone protein DnaK (641 aa).

A Phosphothreonine; by autocatalysis modification is found at Thr-200. Low complexity predominate over residues 602–611; that stretch reads AASSKASAAS. Positions 602–641 are disordered; that stretch reads AASSKASAASSPPPPPGAGGQKSDVIDAEFEKVDKDKPQA. The span at 630-641 shows a compositional bias: basic and acidic residues; that stretch reads EFEKVDKDKPQA.

This sequence belongs to the heat shock protein 70 family.

Acts as a chaperone. The chain is Chaperone protein DnaK from Methylacidiphilum infernorum (isolate V4) (Methylokorus infernorum (strain V4)).